The sequence spans 133 residues: Glutaredoxin-C4, chloroplastic (133 aa).

Residues 1–13 are compositionally biased toward low complexity; the sequence is MGMAQSSSSSSRP. The interval 1–25 is disordered; that stretch reads MGMAQSSSSSSRPSDSEQLEEPSKP. Residues 1 to 27 constitute a chloroplast transit peptide; it reads MGMAQSSSSSSRPSDSEQLEEPSKPVM. The 101-residue stretch at 29-129 folds into the Glutaredoxin domain; the sequence is LDKAKEIVAS…PLLTEAGAIA (101 aa). Residues Cys49 and Cys52 are joined by a disulfide bond.

This sequence belongs to the glutaredoxin family. CPYC subfamily.

The protein resides in the plastid. Its subcellular location is the chloroplast. Functionally, has a glutathione-disulfide oxidoreductase activity in the presence of NADPH and glutathione reductase. Reduces low molecular weight disulfides and proteins. This chain is Glutaredoxin-C4, chloroplastic (GRXC4), found in Oryza sativa subsp. japonica (Rice).